We begin with the raw amino-acid sequence, 216 residues long: 3-isopropylmalate dehydratase small subunit (216 aa).

The protein belongs to the LeuD family. LeuD type 1 subfamily. As to quaternary structure, heterodimer of LeuC and LeuD.

The enzyme catalyses (2R,3S)-3-isopropylmalate = (2S)-2-isopropylmalate. It participates in amino-acid biosynthesis; L-leucine biosynthesis; L-leucine from 3-methyl-2-oxobutanoate: step 2/4. Catalyzes the isomerization between 2-isopropylmalate and 3-isopropylmalate, via the formation of 2-isopropylmaleate. In Acinetobacter baylyi (strain ATCC 33305 / BD413 / ADP1), this protein is 3-isopropylmalate dehydratase small subunit.